A 167-amino-acid chain; its full sequence is NAD(P)H-quinone oxidoreductase subunit I, chloroplastic (167 aa).

2 consecutive 4Fe-4S ferredoxin-type domains span residues 55–84 (GRIHFEFDKCIACEVCVRVCPIDLPVVDWK) and 95–124 (LNYSIDFGICIFCGNCVEYCPTNCLSMTEE). [4Fe-4S] cluster contacts are provided by C64, C67, C70, C74, C104, C107, C110, and C114.

The protein belongs to the complex I 23 kDa subunit family. NDH is composed of at least 16 different subunits, 5 of which are encoded in the nucleus. It depends on [4Fe-4S] cluster as a cofactor.

It localises to the plastid. The protein localises to the chloroplast thylakoid membrane. The enzyme catalyses a plastoquinone + NADH + (n+1) H(+)(in) = a plastoquinol + NAD(+) + n H(+)(out). It carries out the reaction a plastoquinone + NADPH + (n+1) H(+)(in) = a plastoquinol + NADP(+) + n H(+)(out). Its function is as follows. NDH shuttles electrons from NAD(P)H:plastoquinone, via FMN and iron-sulfur (Fe-S) centers, to quinones in the photosynthetic chain and possibly in a chloroplast respiratory chain. The immediate electron acceptor for the enzyme in this species is believed to be plastoquinone. Couples the redox reaction to proton translocation, and thus conserves the redox energy in a proton gradient. This Lobularia maritima (Sweet alyssum) protein is NAD(P)H-quinone oxidoreductase subunit I, chloroplastic.